The primary structure comprises 582 residues: DNA mismatch repair protein MutL (582 aa).

The protein belongs to the DNA mismatch repair MutL/HexB family.

Its function is as follows. This protein is involved in the repair of mismatches in DNA. It is required for dam-dependent methyl-directed DNA mismatch repair. May act as a 'molecular matchmaker', a protein that promotes the formation of a stable complex between two or more DNA-binding proteins in an ATP-dependent manner without itself being part of a final effector complex. This is DNA mismatch repair protein MutL from Acidiphilium cryptum (strain JF-5).